A 781-amino-acid chain; its full sequence is Chloride channel protein CLC-f (781 aa).

Disordered regions lie at residues 1–41 (MSSG…QSPA) and 79–98 (RERH…EEDG). A compositionally biased stretch (basic and acidic residues) spans 10 to 20 (NEDRHLLRSTD). The next 12 membrane-spanning stretches (helical) occupy residues 129–149 (WALL…VAGF), 184–204 (ILLI…LLEI), 221–241 (FLAG…LGTG), 250–270 (SVDI…NNRE), 279–299 (GAAS…FFAI), 314–334 (FTTA…NALL), 350–370 (AAEL…SVVF), 388–408 (FGLP…IIAL), 433–453 (APGI…TALC), 457–477 (GLVG…GAVF), 502–522 (ALVG…TSVL), and 523–543 (LLFE…AVGL). The segment at 553 to 584 (QGKESDSSEGRSTGRGYSSLSPSERKTEGVWR) is disordered. Positions 575 to 584 (SERKTEGVWR) are enriched in basic and acidic residues. CBS domains follow at residues 621–677 (MSKN…NAST) and 699–763 (QERG…EMSR). The helical transmembrane segment at 726-746 (QLPVVKRGEVIHKGKRRKLLG) threads the bilayer.

Belongs to the chloride channel (TC 2.A.49) family. In terms of assembly, homodimer.

The protein localises to the membrane. Functionally, voltage-gated chloride channel. In Arabidopsis thaliana (Mouse-ear cress), this protein is Chloride channel protein CLC-f (CLC-F).